We begin with the raw amino-acid sequence, 230 residues long: Large ribosomal subunit protein uL1 (230 aa).

Belongs to the universal ribosomal protein uL1 family. As to quaternary structure, part of the 50S ribosomal subunit.

Its function is as follows. Binds directly to 23S rRNA. The L1 stalk is quite mobile in the ribosome, and is involved in E site tRNA release. Protein L1 is also a translational repressor protein, it controls the translation of the L11 operon by binding to its mRNA. This is Large ribosomal subunit protein uL1 from Bifidobacterium longum subsp. infantis (strain ATCC 15697 / DSM 20088 / JCM 1222 / NCTC 11817 / S12).